The following is a 315-amino-acid chain: Shiga toxin subunit A (315 aa).

The N-terminal stretch at 1-22 (MKIIIFRVLTFFFVIFSVNVVA) is a signal peptide. The segment at 23-273 (KEFTLDFSTA…CHHHASRVAR (251 aa)) is A1. Residue glutamate 189 is part of the active site. An intrachain disulfide couples cysteine 264 to cysteine 283. An A2 region spans residues 274–315 (MASDEFPSMCPADGRVRGITHNKILWDSSTLGAILMRRTISS).

Belongs to the ribosome-inactivating protein family. In terms of assembly, shiga toxin contains a single subunit A and five copies of subunit B.

It catalyses the reaction Endohydrolysis of the N-glycosidic bond at one specific adenosine on the 28S rRNA.. Functionally, the A subunit is responsible for inhibiting protein synthesis through the catalytic inactivation of 60S ribosomal subunits. After endocytosis, the A subunit is cleaved by furin in two fragments, A1 and A2: A1 is the catalytically active fragment, and A2 is essential for holotoxin assembly with the B subunits. This chain is Shiga toxin subunit A (stxA), found in Shigella sonnei (Shigella sonnei bacteriophage 7888).